Here is a 332-residue protein sequence, read N- to C-terminus: Putative ketol-acid reductoisomerase 3 (332 aa).

A KARI N-terminal Rossmann domain is found at 1 to 182; it reads MDKTVLDASL…AIPGGIAVIS (182 aa). One can recognise a KARI C-terminal knotted domain in the interval 183–329; it reads SFEEEALLDL…KELYKILRRK (147 aa).

Belongs to the ketol-acid reductoisomerase family.

The enzyme catalyses (2R)-2,3-dihydroxy-3-methylbutanoate + NADP(+) = (2S)-2-acetolactate + NADPH + H(+). It carries out the reaction (2R,3R)-2,3-dihydroxy-3-methylpentanoate + NADP(+) = (S)-2-ethyl-2-hydroxy-3-oxobutanoate + NADPH + H(+). It participates in amino-acid biosynthesis; L-isoleucine biosynthesis; L-isoleucine from 2-oxobutanoate: step 2/4. The protein operates within amino-acid biosynthesis; L-valine biosynthesis; L-valine from pyruvate: step 2/4. The protein is Putative ketol-acid reductoisomerase 3 (ilvC3) of Saccharolobus solfataricus (strain ATCC 35092 / DSM 1617 / JCM 11322 / P2) (Sulfolobus solfataricus).